A 343-amino-acid chain; its full sequence is Anthranilate phosphoribosyltransferase (343 aa).

Residues G85, 88 to 89 (GD), T93, 95 to 98 (NIST), 113 to 121 (KHGGRSVSS), and A125 each bind 5-phospho-alpha-D-ribose 1-diphosphate. G85 provides a ligand contact to anthranilate. A Mg(2+)-binding site is contributed by S97. An anthranilate-binding site is contributed by R171. Positions 230 and 231 each coordinate Mg(2+).

Belongs to the anthranilate phosphoribosyltransferase family. In terms of assembly, homodimer. It depends on Mg(2+) as a cofactor.

The enzyme catalyses N-(5-phospho-beta-D-ribosyl)anthranilate + diphosphate = 5-phospho-alpha-D-ribose 1-diphosphate + anthranilate. It functions in the pathway amino-acid biosynthesis; L-tryptophan biosynthesis; L-tryptophan from chorismate: step 2/5. Catalyzes the transfer of the phosphoribosyl group of 5-phosphorylribose-1-pyrophosphate (PRPP) to anthranilate to yield N-(5'-phosphoribosyl)-anthranilate (PRA). In Aromatoleum aromaticum (strain DSM 19018 / LMG 30748 / EbN1) (Azoarcus sp. (strain EbN1)), this protein is Anthranilate phosphoribosyltransferase.